The primary structure comprises 142 residues: Transcription antitermination protein NusB (142 aa).

Belongs to the NusB family.

In terms of biological role, involved in transcription antitermination. Required for transcription of ribosomal RNA (rRNA) genes. Binds specifically to the boxA antiterminator sequence of the ribosomal RNA (rrn) operons. The protein is Transcription antitermination protein NusB of Roseiflexus sp. (strain RS-1).